We begin with the raw amino-acid sequence, 1181 residues long: Putative type II restriction enzyme and methyltransferase RM.MjaORFECS2P (1181 aa).

This sequence in the C-terminal section; belongs to the N(4)/N(6)-methyltransferase family.

It catalyses the reaction Endonucleolytic cleavage of DNA to give specific double-stranded fragments with terminal 5'-phosphates.. The enzyme catalyses a 2'-deoxyadenosine in DNA + S-adenosyl-L-methionine = an N(6)-methyl-2'-deoxyadenosine in DNA + S-adenosyl-L-homocysteine + H(+). In terms of biological role, probably a G subtype restriction enzyme that recognizes an undetermined sequence and cleaves at an undetermined site. Probably also acts as an alpha subtype methylase, presumably on the same sequence. The sequence is that of Putative type II restriction enzyme and methyltransferase RM.MjaORFECS2P from Methanocaldococcus jannaschii (strain ATCC 43067 / DSM 2661 / JAL-1 / JCM 10045 / NBRC 100440) (Methanococcus jannaschii).